An 882-amino-acid chain; its full sequence is Alanine--tRNA ligase (882 aa).

Zn(2+) contacts are provided by His568, His572, Cys670, and His674.

It belongs to the class-II aminoacyl-tRNA synthetase family. Requires Zn(2+) as cofactor.

The protein resides in the cytoplasm. The catalysed reaction is tRNA(Ala) + L-alanine + ATP = L-alanyl-tRNA(Ala) + AMP + diphosphate. Functionally, catalyzes the attachment of alanine to tRNA(Ala) in a two-step reaction: alanine is first activated by ATP to form Ala-AMP and then transferred to the acceptor end of tRNA(Ala). Also edits incorrectly charged Ser-tRNA(Ala) and Gly-tRNA(Ala) via its editing domain. This is Alanine--tRNA ligase from Lactobacillus gasseri (strain ATCC 33323 / DSM 20243 / BCRC 14619 / CIP 102991 / JCM 1131 / KCTC 3163 / NCIMB 11718 / NCTC 13722 / AM63).